The sequence spans 486 residues: Secreted protein C (486 aa).

The signal sequence occupies residues methionine 1–alanine 22. Residues glycine 30 to histidine 332 form a disordered region. N-linked (GlcNAc...) asparagine glycosylation occurs at asparagine 37. Gly residues predominate over residues serine 41–glutamine 60. Over residues serine 61 to serine 318 the composition is skewed to low complexity. 7 N-linked (GlcNAc...) asparagine glycosylation sites follow: asparagine 73, asparagine 74, asparagine 83, asparagine 112, asparagine 129, asparagine 149, and asparagine 174.

The protein belongs to the Sct family.

It localises to the secreted. The protein is Secreted protein C of Dictyostelium discoideum (Social amoeba).